Consider the following 54-residue polypeptide: MFSWALVFLIFALVAGVLGFTGLAGTASSIAWILFVVGLIVSLIFLVAGRRPTV.

2 helical membrane passes run 4 to 24 (WALV…TGLA) and 29 to 49 (SIAW…LVAG).

The protein belongs to the UPF0391 family.

The protein resides in the cell membrane. In Teredinibacter turnerae (strain ATCC 39867 / T7901), this protein is UPF0391 membrane protein TERTU_3637.